Consider the following 346-residue polypeptide: Peripherin-2 (346 aa).

The Cytoplasmic portion of the chain corresponds to 1-24; sequence MALMKTKFNLKRRVKLAQGLWLMN. Residues 25-43 form a helical membrane-spanning segment; the sequence is WCCVLAGIALFSMGVFLKI. Topologically, residues 44-61 are lumenal; it reads ELRKRSEVMDNDESHFVP. Residues 62–80 form a helical membrane-spanning segment; that stretch reads NSLILMGSLACALNAFPGK. Residues 81 to 99 lie on the Cytoplasmic side of the membrane; the sequence is ICYDSLDPTKFPRWKPMLK. The helical transmembrane segment at 100–123 threads the bilayer; the sequence is PYLIICLIFNIFIFFTGVVCFLTR. The Lumenal portion of the chain corresponds to 124–264; the sequence is GSLESTLAHG…LNYYTSMMSS (141 aa). The N-linked (GlcNAc...) asparagine glycan is linked to asparagine 229. A helical membrane pass occupies residues 265-290; sequence MGGMVFLVWIMEMAVMIGLRFLHTCL. Over 291 to 346 the chain is Cytoplasmic; it reads ETIANPEDPECESEGWILEKSLKDTIKSSWELVKSMGKLNKVETAGGEEAGVATVS.

This sequence belongs to the PRPH2/ROM1 family. In terms of assembly, homodimer; disulfide-linked. In terms of tissue distribution, found in both rod and cone photoreceptors. Specifically in the rims and incisures of rod and cone outer segment disks.

It localises to the membrane. Functionally, may be involved in the morphogenesis of retina outer segment disks and the development and maintenance of the retina ultrastructure. In Xenopus laevis (African clawed frog), this protein is Peripherin-2 (prph2).